The sequence spans 341 residues: Putative gustatory receptor 9a (341 aa).

Residue Met1 is a topological domain, cytoplasmic. The chain crosses the membrane as a helical span at residues 2-22 (SLWLEHFLTGYFQLCGLVCGW). Over 23-30 (SGSRLGRL) the chain is Extracellular. Residues 31-51 (LSSTFLVLILIELVGEIETYF) traverse the membrane as a helical segment. Residues 52–68 (TEENPDNESVPAYFAKV) are Cytoplasmic-facing. A helical transmembrane segment spans residues 69-89 (IMGVNMAYKMIHAWIALSALF). Residues 90–113 (ECRRFRYLLEELPPVKATSFIYRH) are Extracellular-facing. A helical membrane pass occupies residues 114-134 (LILEIILFACNAFLVLSEYTI). Over 135–202 (RGIYLENLRY…LAKVTRSLSH (68 aa)) the chain is Cytoplasmic. Residues 203-223 (LFGLSLLLLNVLCLGDWIIVC) traverse the membrane as a helical segment. Residues 224–233 (NVYFMVAYLQ) lie on the Extracellular side of the membrane. The helical transmembrane segment at 234–254 (VLPATLFLFGQVMFVVCPTLI) threads the bilayer. At 255 to 318 (KIWSICAASH…GIYHLNLQTL (64 aa)) the chain is on the cytoplasmic side. Residues 319–339 (AGMFFFILEALVIFLQFVSLV) form a helical membrane-spanning segment. Residues 340-341 (RT) lie on the Extracellular side of the membrane.

Belongs to the insect chemoreceptor superfamily. Gustatory receptor (GR) family. Gr2a subfamily. As to expression, expressed in neurons of the terminal external chemosensory organ of larvae.

It localises to the cell membrane. Its function is as follows. Probable gustatory receptor which mediates acceptance or avoidance behavior, depending on its substrates. The polypeptide is Putative gustatory receptor 9a (Gr9a) (Drosophila melanogaster (Fruit fly)).